Consider the following 541-residue polypeptide: Chaperonin GroEL 2 (541 aa).

Residues 29–32 (TLGP), 86–90 (DGTTT), G413, 476–478 (NAA), and D492 each bind ATP.

This sequence belongs to the chaperonin (HSP60) family. Forms a cylinder of 14 subunits composed of two heptameric rings stacked back-to-back. Interacts with the co-chaperonin GroES.

The protein localises to the secreted. It is found in the capsule. Its subcellular location is the cell surface. The protein resides in the cell wall. The catalysed reaction is ATP + H2O + a folded polypeptide = ADP + phosphate + an unfolded polypeptide.. In terms of biological role, together with its co-chaperonin GroES, plays an essential role in assisting protein folding. The GroEL-GroES system forms a nano-cage that allows encapsulation of the non-native substrate proteins and provides a physical environment optimized to promote and accelerate protein folding. The chain is Chaperonin GroEL 2 from Mycobacterium avium (strain 104).